The sequence spans 772 residues: Mitochondrial intermediate peptidase (772 aa).

Residues 1-37 (MLRTIILKAGSNASIPSLSRQNKLLRFFATAGAVSRT) constitute a mitochondrion transit peptide. His-558 serves as a coordination point for Zn(2+). Glu-559 is an active-site residue. Zn(2+) is bound by residues His-562 and His-565.

The protein belongs to the peptidase M3 family. The cofactor is Zn(2+).

It localises to the mitochondrion matrix. It carries out the reaction Release of an N-terminal octapeptide as second stage of processing of some proteins imported into the mitochondrion.. Stimulated by Fe(2+). Functionally, cleaves proteins, imported into the mitochondrion, to their mature size. While most mitochondrial precursor proteins are processed to the mature form in one step by mitochondrial processing peptidase (MPP), the sequential cleavage by MIP of an octapeptide after initial processing by MPP is a required step for a subgroup of nuclear-encoded precursor proteins destined for the matrix or the inner membrane. Cleaves precursor proteins of respiratory components, including subunits of the electron transport chain and tricarboxylic acid cycle enzymes, and components of the mitochondrial genetic machinery, including ribosomal proteins, translation factors, and proteins required for mitochondrial DNA metabolism. The chain is Mitochondrial intermediate peptidase (OCT1) from Saccharomyces cerevisiae (strain YJM789) (Baker's yeast).